Reading from the N-terminus, the 295-residue chain is Protease HtpX homolog (295 aa).

A run of 2 helical transmembrane segments spans residues 6 to 26 and 40 to 60; these read IGLF…VTSV and LSSL…VSLL. His148 contacts Zn(2+). Glu149 is an active-site residue. Zn(2+) is bound at residue His152. 2 consecutive transmembrane segments (helical) span residues 163 to 183 and 198 to 218; these read LIQG…SYAL and ISNI…VAYF. Zn(2+) is bound at residue Glu223.

It belongs to the peptidase M48B family. Zn(2+) serves as cofactor.

Its subcellular location is the cell inner membrane. This Leptospira borgpetersenii serovar Hardjo-bovis (strain JB197) protein is Protease HtpX homolog.